A 412-amino-acid chain; its full sequence is MAALKYAGMEDTDSEDELPPGWEERSTKDGWVYYANHEEMKTQWEHPKTGKKKRCAGALPYGWEQETDDKGQIFYVDHINKRKTYFDPRQAFTVEDMQVKPKRYDGNTGALEILHGQDLSDKVIIVTGANSGIGFETARSFALHGAHVILACRNQSRASKAASLIMGEWSKARVEVLPLDLASLRSVRQFAELFKATKLPLHVLVCNAAVCSQPWRLTEDGFESTFQICHLGHFLLVQLLQDVLRLSAPARVVVVSSESHRFTDLLDSCGNLDLDLLSPPQKNYWSLLAYNRAKLCNLLFSSELHRRMSPHGICCNALHPGSMMFTSIHRSWWLLTLLFSLARPFTKSMQQGAATTVYCAVAPELEGIGGMYFNNCFRCLPSPQAQDPAAALSLWELSERLVQERSTPPQVL.

The tract at residues 1–24 (MAALKYAGMEDTDSEDELPPGWEE) is disordered. In terms of domain architecture, WW 1 spans 16 to 49 (DELPPGWEERSTKDGWVYYANHEEMKTQWEHPKT). Positions 50 to 55 (GKKKRC) match the Nuclear localization signal motif. Positions 57–90 (GALPYGWEQETDDKGQIFYVDHINKRKTYFDPRQ) constitute a WW 2 domain. An NADP(+)-binding site is contributed by 128–134 (GANSGIG). Serine 257 is a substrate binding site. Tyrosine 290 (proton acceptor) is an active-site residue.

The protein belongs to the short-chain dehydrogenases/reductases (SDR) family.

Its subcellular location is the cytoplasm. The protein localises to the mitochondrion. It localises to the golgi apparatus. The protein resides in the lysosome. In terms of biological role, putative oxidoreductase. Acts as a tumor suppressor and plays a role in apoptosis. May function synergistically with p53/TP53 to control genotoxic stress-induced cell death. Plays a role in TGFB1 signaling and TGFB1-mediated cell death. May also play a role in tumor necrosis factor (TNF)-mediated cell death. Required for normal bone development. Inhibits Wnt signaling. This is WW domain-containing oxidoreductase (wwox) from Danio rerio (Zebrafish).